A 313-amino-acid polypeptide reads, in one-letter code: MYSCTSPSGIEVSLNKPEIWEKFYPKTEMIVTRKRGRVIFPHLDYNVKGLDPDSLYSIYIHLERVDGIKYKFDAGEWKEAGKGDPILPIQYKEHPRGKRTGTEWMSEPVSFAHLKITNDPENKDQKLILAQSLHKYIPVLHIKQLDPYKGTFQMDFHGVEFRLEATQFIVVTAYQNEELTKLKVHHNKFASGFRSNGKRRLSSESENSENSPPKRSASAISSLTPPAISPPMDYTQQNPYFFNQNFFSTPQSHQPQFAAHSANAQNYNNFGAQNGAQFDWNVYYQRQWYWQQQMMMSGGIGQPQMLNNGFPNL.

The T-box DNA-binding region spans 19-195 (IWEKFYPKTE…HNKFASGFRS (177 aa)). The disordered stretch occupies residues 193–228 (FRSNGKRRLSSESENSENSPPKRSASAISSLTPPAI).

It localises to the nucleus. In terms of biological role, transcription factor. Required for mesodermal induction, acting redundantly with transcription factor tbx-38. Together with tbx-38, acts by inducing cell fates in the AB lineage, thereby playing a role in development of the anterior pharynx. The sequence is that of T-box protein 37 (tbx-37) from Caenorhabditis elegans.